The chain runs to 61 residues: N-acetyl-D-glucosamine kinase (61 aa).

Phosphotyrosine is present on Y30. An ATP-binding site is contributed by S45.

Belongs to the eukaryotic-type N-acetylglucosamine kinase family. In terms of assembly, homodimer.

It carries out the reaction N-acetyl-D-glucosamine + ATP = N-acetyl-D-glucosamine 6-phosphate + ADP + H(+). The catalysed reaction is aldehydo-N-acetyl-D-mannosamine + ATP = aldehydo-N-acetyl-D-mannosamine 6-phosphate + ADP + H(+). It catalyses the reaction N-acetyl-D-muramoyl-L-alanyl-D-isoglutamine + ATP = 6-O-phospho-N-acetyl-D-muramoyl-L-alanyl-D-isoglutamine + ADP + H(+). It functions in the pathway amino-sugar metabolism; N-acetylneuraminate degradation. Functionally, converts endogenous N-acetylglucosamine (GlcNAc), a major component of complex carbohydrates, from lysosomal degradation or nutritional sources into GlcNAc 6-phosphate. Also has N-acetylmannosamine (ManNAc) kinase activity. Involved in the N-glycolylneuraminic acid (Neu5Gc) degradation pathway. Also involved in innate immunity by promoting detection of bacterial peptidoglycan by NOD2: acts by catalyzing phosphorylation of muramyl dipeptide (MDP), a fragment of bacterial peptidoglycan, to generate 6-O-phospho-muramyl dipeptide, which acts as a direct ligand for NOD2. The sequence is that of N-acetyl-D-glucosamine kinase from Mesocricetus auratus (Golden hamster).